Consider the following 473-residue polypeptide: Lactate utilization protein B (473 aa).

4Fe-4S ferredoxin-type domains lie at 303–333 (GTAFQPVLQCIRCAACINVCPVYRHVGGHSY) and 352–381 (YDDYQELPFASSLCAACTDACPVKIPLHEL). [4Fe-4S] cluster-binding residues include C312, C315, C318, C322, C365, C368, and C372.

Belongs to the LutB/YkgF family.

Its function is as follows. Is involved in L-lactate degradation and allows cells to grow with lactate as the sole carbon source. Has probably a role as an electron transporter during oxidation of L-lactate. This Bacillus pumilus (strain SAFR-032) protein is Lactate utilization protein B.